Reading from the N-terminus, the 156-residue chain is Deoxyuridine 5'-triphosphate nucleotidohydrolase (156 aa).

Residues 76–78 (RSG), asparagine 89, 93–95 (TVD), and lysine 103 contribute to the substrate site.

It belongs to the dUTPase family. The cofactor is Mg(2+).

The catalysed reaction is dUTP + H2O = dUMP + diphosphate + H(+). The protein operates within pyrimidine metabolism; dUMP biosynthesis; dUMP from dCTP (dUTP route): step 2/2. This enzyme is involved in nucleotide metabolism: it produces dUMP, the immediate precursor of thymidine nucleotides and it decreases the intracellular concentration of dUTP so that uracil cannot be incorporated into DNA. In Rhizobium etli (strain CIAT 652), this protein is Deoxyuridine 5'-triphosphate nucleotidohydrolase.